The following is a 671-amino-acid chain: Probable boron transporter 6 (671 aa).

Over 1–37 the chain is Cytoplasmic; sequence MKSEGESGPFQGILRDIEGRRKCYKQDWIRGIKTGIR. Residues 38–58 traverse the membrane as a helical segment; the sequence is ILAPTCYIFFASSLPVVAFGE. The Extracellular segment spans residues 59 to 77; that stretch reads QLSKHTGGALSAVETLAST. A helical membrane pass occupies residues 78 to 98; the sequence is SICGIIHAIFGGQPLLIVGVA. Topologically, residues 99-123 are cytoplasmic; it reads EPTIIMYTYLYSFCISRPDIGRELY. A helical transmembrane segment spans residues 124–144; the sequence is LAWVAWVCVWTSVLLILLSIF. The Extracellular portion of the chain corresponds to 145-157; that stretch reads NAGTIITRFTRIA. Residues 158-178 traverse the membrane as a helical segment; the sequence is GELFGMLIAVLFLQEAIKGLI. Topologically, residues 179 to 195 are cytoplasmic; that stretch reads SEFHAPEIKNQETGKSH. The chain crosses the membrane as a helical span at residues 196–216; sequence FLLIYANGLLAVIFSLGLLIT. At 217–235 the chain is on the extracellular side; that stretch reads ALKSRRAKSWKYGFGWLRS. Residues 236 to 256 form a helical membrane-spanning segment; that stretch reads FIGDYGVPLMVLLWTALSYTV. Residues 257–291 are Cytoplasmic-facing; that stretch reads PSEVLPSVPRRLFCPLPWEPASLYHWTVVKDMGKV. The helical transmembrane segment at 292 to 312 threads the bilayer; it reads PIMYILAAFIPGVMIAGLYFF. At 313–332 the chain is on the extracellular side; the sequence is DHSVASQMAQQKEFNLKNPS. Residues 333–353 traverse the membrane as a helical segment; sequence AYHYDIFLLGIITLICGLLGL. At 354–469 the chain is on the cytoplasmic side; sequence PPSNGVLPQA…EQRVSNLLQS (116 aa). Residues 470–490 form a helical membrane-spanning segment; sequence VLVGLTLLAVTVIKMIPSSVL. Topologically, residues 491-557 are extracellular; that stretch reads WGYFAYMAID…QLVYFLLCYG (67 aa). The helical transmembrane segment at 558-578 threads the bilayer; sequence MTWIPMAGIFFPALFFLLISI. At 579–671 the chain is on the cytoplasmic side; the sequence is REHLLPKLFD…EEKHVTFEPH (93 aa).

Belongs to the anion exchanger (TC 2.A.31.3) family.

It localises to the membrane. In terms of biological role, probable boron transporter. Boron is essential for maintaining the integrity of plants cell walls. This Arabidopsis thaliana (Mouse-ear cress) protein is Probable boron transporter 6 (BOR6).